The primary structure comprises 63 residues: Conotoxin Pn-B01411 (63 aa).

An N-terminal signal peptide occupies residues 1–22 (MRCFPVFIILLLLMASAPSFDA). The propeptide occupies 23 to 49 (RPKTEDDVPLSSFRDNLKRTLRTLLDP). I62 bears the Isoleucine amide mark.

The protein belongs to the conotoxin T superfamily. In terms of processing, contains 2 disulfide bonds that can be either 'C1-C3, C2-C4' or 'C1-C4, C2-C3', since these disulfide connectivities have been observed for conotoxins with cysteine framework V (for examples, see AC P0DQQ7 and AC P81755). In terms of tissue distribution, expressed by the venom duct.

Its subcellular location is the secreted. This chain is Conotoxin Pn-B01411, found in Conus pennaceus (Feathered cone).